The following is a 581-amino-acid chain: 2-succinyl-5-enolpyruvyl-6-hydroxy-3-cyclohexene-1-carboxylate synthase (581 aa).

It belongs to the TPP enzyme family. MenD subfamily. In terms of assembly, homodimer. Mg(2+) serves as cofactor. It depends on Mn(2+) as a cofactor. Thiamine diphosphate is required as a cofactor.

The enzyme catalyses isochorismate + 2-oxoglutarate + H(+) = 5-enolpyruvoyl-6-hydroxy-2-succinyl-cyclohex-3-ene-1-carboxylate + CO2. The protein operates within quinol/quinone metabolism; 1,4-dihydroxy-2-naphthoate biosynthesis; 1,4-dihydroxy-2-naphthoate from chorismate: step 2/7. It functions in the pathway quinol/quinone metabolism; menaquinone biosynthesis. Functionally, catalyzes the thiamine diphosphate-dependent decarboxylation of 2-oxoglutarate and the subsequent addition of the resulting succinic semialdehyde-thiamine pyrophosphate anion to isochorismate to yield 2-succinyl-5-enolpyruvyl-6-hydroxy-3-cyclohexene-1-carboxylate (SEPHCHC). In Psychromonas ingrahamii (strain DSM 17664 / CCUG 51855 / 37), this protein is 2-succinyl-5-enolpyruvyl-6-hydroxy-3-cyclohexene-1-carboxylate synthase.